Consider the following 350-residue polypeptide: Biotin synthase (350 aa).

Over residues 1–13 the composition is skewed to polar residues; that stretch reads MVTQAATRPSNDA. The interval 1–20 is disordered; that stretch reads MVTQAATRPSNDAGQDGVTE. The Radical SAM core domain occupies 71–296; it reads PEVEVEGIIS…RTMLRFAGGR (226 aa). 3 residues coordinate [4Fe-4S] cluster: cysteine 86, cysteine 90, and cysteine 93. Cysteine 129, cysteine 162, cysteine 221, and arginine 291 together coordinate [2Fe-2S] cluster.

This sequence belongs to the radical SAM superfamily. Biotin synthase family. In terms of assembly, homodimer. It depends on [4Fe-4S] cluster as a cofactor. [2Fe-2S] cluster serves as cofactor.

The enzyme catalyses (4R,5S)-dethiobiotin + (sulfur carrier)-SH + 2 reduced [2Fe-2S]-[ferredoxin] + 2 S-adenosyl-L-methionine = (sulfur carrier)-H + biotin + 2 5'-deoxyadenosine + 2 L-methionine + 2 oxidized [2Fe-2S]-[ferredoxin]. It participates in cofactor biosynthesis; biotin biosynthesis; biotin from 7,8-diaminononanoate: step 2/2. Catalyzes the conversion of dethiobiotin (DTB) to biotin by the insertion of a sulfur atom into dethiobiotin via a radical-based mechanism. In Mycobacterium ulcerans (strain Agy99), this protein is Biotin synthase.